A 1266-amino-acid chain; its full sequence is Rho GTPase-activating protein 29 (1266 aa).

Residues Ser-166, Ser-171, Ser-174, and Ser-185 each carry the phosphoserine modification. The region spanning 187-457 (IELDNLLLKN…SAKLYDPGQE (271 aa)) is the F-BAR domain. The stretch at 291-413 (RKNEMEKQRK…EILTQLRTLV (123 aa)) forms a coiled coil. Phosphoserine occurs at positions 496, 516, and 549. Low complexity predominate over residues 538 to 556 (SESTGGSSESRSLDSESIS). The segment at 538-596 (SESTGGSSESRSLDSESISPGDFHRKLPRTPSSGTMSSADDLDEREPPSPSEAGPNSLG) is disordered. The segment at 609–654 (THKFRKLRSPTKCRDCEGIVMFPGVECEECLLVCHRKCLENLVIVC) adopts a Phorbol-ester/DAG-type zinc-finger fold. One can recognise a Rho-GAP domain in the interval 668–883 (AEFIQVAKKE…FLITYAQKIF (216 aa)). Phosphoserine occurs at positions 915, 951, and 1023. 3 disordered regions span residues 1033-1054 (AGSPTERSSRNTGNTDSDKFGK), 1114-1153 (VSTGNNRGHSSGAAQPSKAHADPARSARDTSEHSSSDSCP), and 1222-1248 (VQTSGQPKESSEEPGLPEGTPTCQRPR). A compositionally biased stretch (polar residues) spans 1115 to 1127 (STGNNRGHSSGAA). A compositionally biased stretch (basic and acidic residues) spans 1132–1148 (AHADPARSARDTSEHSS). 2 positions are modified to phosphoserine: Ser-1149 and Ser-1151. An interaction with PTPN13/PTPL1 region spans residues 1263–1266 (PQFV).

Interacts with PTPN13/PTPL1. Interacts with RAP2A via its coiled coil domain. Interacts with RASIP1.

GTPase activator for the Rho-type GTPases by converting them to an inactive GDP-bound state. Has strong activity toward RHOA, and weaker activity toward RAC1 and CDC42. May act as a specific effector of RAP2A to regulate Rho. In concert with RASIP1, suppresses RhoA signaling and dampens ROCK and MYH9 activities in endothelial cells and plays an essential role in blood vessel tubulogenesis. The sequence is that of Rho GTPase-activating protein 29 (Arhgap29) from Rattus norvegicus (Rat).